The following is a 554-amino-acid chain: DNA mismatch repair protein MutL (554 aa).

It belongs to the DNA mismatch repair MutL/HexB family.

In terms of biological role, this protein is involved in the repair of mismatches in DNA. It is required for dam-dependent methyl-directed DNA mismatch repair. May act as a 'molecular matchmaker', a protein that promotes the formation of a stable complex between two or more DNA-binding proteins in an ATP-dependent manner without itself being part of a final effector complex. This chain is DNA mismatch repair protein MutL, found in Crocosphaera subtropica (strain ATCC 51142 / BH68) (Cyanothece sp. (strain ATCC 51142)).